Reading from the N-terminus, the 517-residue chain is Lysophosphatidylcholine acyltransferase 2B (517 aa).

A glycan (N-linked (GlcNAc...) asparagine) is linked at asparagine 29. 3 helical membrane-spanning segments follow: residues 70 to 90, 103 to 123, and 137 to 157; these read IVFLFLLLWPVALLSTINLPI, LIKPVFIFLLRLAFFCAGFLI, and IFVVAPHSTFFDAIAVIVAGL. Residues 143–148 carry the HXXXXD motif motif; the sequence is HSTFFD. EF-hand domains are found at residues 388–423 and 425–460; these read PISEPLRQLFSLFDRNQDGTIDFREYVIGLTVLCNP and NTEKILQMSFKLFDLDEDGYITEQELTTMLRAAFGV. The Ca(2+) site is built by aspartate 401, asparagine 403, aspartate 405, threonine 407, glutamate 412, aspartate 438, aspartate 440, aspartate 442, tyrosine 444, and glutamate 449.

It belongs to the 1-acyl-sn-glycerol-3-phosphate acyltransferase family.

It is found in the membrane. It functions in the pathway lipid metabolism; phospholipid metabolism. Probable acetyltransferase. This chain is Lysophosphatidylcholine acyltransferase 2B (Lpcat2b), found in Rattus norvegicus (Rat).